A 238-amino-acid chain; its full sequence is Ras association domain-containing protein 3 (238 aa).

S2 carries the N-acetylserine modification. Residues 26-48 (RAPQGKPRSGQQDVEKEKETHSY) are disordered. Residues 38–48 (DVEKEKETHSY) show a composition bias toward basic and acidic residues. One can recognise a Ras-associating domain in the interval 79-186 (YTGFIKVQME…TLSFVLREHE (108 aa)). In terms of domain architecture, SARAH spans 187–234 (IGEWEAFSLPELQNFLRILDKEEDEQLQNLKRRYTAYRQKLEEALREV).

In terms of tissue distribution, widely expressed.

The protein resides in the cytoplasm. Its subcellular location is the cytoskeleton. This chain is Ras association domain-containing protein 3 (RASSF3), found in Homo sapiens (Human).